A 136-amino-acid polypeptide reads, in one-letter code: Basic phospholipase A2 Tgc-K49 (136 aa).

The signal sequence occupies residues 1–15 (MRTLWIVAVLLVGEG). Cystine bridges form between cysteine 41–cysteine 130, cysteine 43–cysteine 59, cysteine 58–cysteine 110, cysteine 64–cysteine 136, cysteine 65–cysteine 103, cysteine 72–cysteine 96, and cysteine 90–cysteine 101. The active site involves histidine 62. Aspartate 104 is an active-site residue.

It belongs to the phospholipase A2 family. Group II subfamily. K49 sub-subfamily. In terms of tissue distribution, expressed by the venom gland.

Its subcellular location is the secreted. The enzyme catalyses a 1,2-diacyl-sn-glycero-3-phosphocholine + H2O = a 1-acyl-sn-glycero-3-phosphocholine + a fatty acid + H(+). Functionally, PLA2 catalyzes the calcium-dependent hydrolysis of the 2-acyl groups in 3-sn-phosphoglycerides. In Trimeresurus gracilis (Kikuchi habu), this protein is Basic phospholipase A2 Tgc-K49.